Here is an 83-residue protein sequence, read N- to C-terminus: Mu-theraphotoxin-Hhn2k (83 aa).

A signal peptide spans 1-21 (MKASMFLALAGLVLLFVVDYA). The propeptide occupies 22 to 48 (SESEEKEFPIELLSKIFAVDVFKGEER). 3 disulfide bridges follow: Cys-50–Cys-65, Cys-57–Cys-70, and Cys-64–Cys-77. Leucine amide is present on Leu-81.

This sequence belongs to the neurotoxin 10 (Hwtx-1) family. 15 (Hntx-3) subfamily. As to quaternary structure, monomer. Expressed by the venom gland.

The protein localises to the secreted. In terms of biological role, lethal neurotoxin. Selectively blocks tetrodotoxin-sensitive voltage-gated sodium channels (Nav). Does not affect tetrodotoxin-resistant voltage-gated sodium channels or calcium channels. This chain is Mu-theraphotoxin-Hhn2k, found in Cyriopagopus hainanus (Chinese bird spider).